The following is a 283-amino-acid chain: Acyl-coenzyme A diphosphatase FITM2 (283 aa).

The span at 1 to 11 shows a compositional bias: low complexity; that stretch reads MSTRRSSTRAD. The segment at 1–21 is disordered; sequence MSTRRSSTRADSTTKRPASPN. The Cytoplasmic portion of the chain corresponds to 1 to 39; the sequence is MSTRRSSTRADSTTKRPASPNSTPNAALGIFVAIARQIL. Residues 40–60 traverse the membrane as a helical segment; the sequence is FIDARKVALFYLAFVTVLSFI. Over 61 to 81 the chain is Lumenal; sequence ESRIELDSTYYLVQKHSVLNQ. Residues 82–102 form a helical membrane-spanning segment; the sequence is YGVKMGWFWTLVIVGPFIWFS. Topologically, residues 103 to 120 are cytoplasmic; it reads SKAHNRRDRDQPIVDVCR. Residues 121-141 form a helical membrane-spanning segment; that stretch reads LGVGTACWYFSVQFFHKVLAL. Over 142 to 168 the chain is Lumenal; it reads TSMCDKGRTLTRAQCSEKEGVWTPGYD. A helical membrane pass occupies residues 169 to 189; it reads ISGHCFLMIYSILIITEEAIA. Histidine 172 is an active-site residue. Residues 190-219 are Cytoplasmic-facing; sequence YRHYQQVTDAVHQMDGDREEHDRLTRCIQY. The next 2 membrane-spanning stretches (helical) occupy residues 220 to 240 and 241 to 261; these read FFVA…ISVL and YYHI…CWFV. Residue histidine 243 is part of the active site. Residues 262–283 lie on the Cytoplasmic side of the membrane; it reads TYRMLYPAGFLASPIRRTVGRK.

This sequence belongs to the FIT family. FIT2 subfamily.

It localises to the endoplasmic reticulum membrane. The enzyme catalyses an acyl-CoA + H2O = an acyl-4'-phosphopantetheine + adenosine 3',5'-bisphosphate + 2 H(+). In terms of biological role, fatty acyl-coenzyme A (CoA) diphosphatase that hydrolyzes fatty acyl-CoA to yield acyl-4'-phosphopantetheine and adenosine 3',5'-bisphosphate. Preferentially hydrolyzes unsaturated long-chain acyl-CoA substrates in the endoplasmic reticulum (ER) lumen. This catalytic activity is required for maintaining ER structure and for lipid droplets (LDs) biogenesis, which are lipid storage organelles involved in maintaining lipid and energy homeostasis. May directly bind to diacylglycerol (DAGs) and triacylglycerol, which is also important for LD biogenesis. May support directional budding of nacent LDs from the ER into the cytosol by reducing DAG levels at sites of LD formation. May play a role in the regulation of cell morphology, ER morphology and cytoskeletal organization. This Caenorhabditis elegans protein is Acyl-coenzyme A diphosphatase FITM2.